We begin with the raw amino-acid sequence, 301 residues long: Haloalkane dehalogenase (301 aa).

Asp-123 functions as the Nucleophile in the catalytic mechanism. The active-site Proton donor is the Asp-250. His-279 serves as the catalytic Proton acceptor.

The protein belongs to the haloalkane dehalogenase family. Type 1 subfamily. In terms of assembly, monomer.

It catalyses the reaction 1-haloalkane + H2O = a halide anion + a primary alcohol + H(+). In terms of biological role, catalyzes hydrolytic cleavage of carbon-halogen bonds in halogenated aliphatic compounds, leading to the formation of the corresponding primary alcohols, halide ions and protons. The chain is Haloalkane dehalogenase from Phenylobacterium zucineum (strain HLK1).